Here is a 124-residue protein sequence, read N- to C-terminus: Fluoride-specific ion channel FluC (124 aa).

Transmembrane regions (helical) follow at residues 4–24 (LLLV…ISIF), 35–55 (FGTL…YALG), 60–80 (ISPE…TTFS), and 102–122 (VVLN…LVFS). Gly-74 and Thr-77 together coordinate Na(+).

This sequence belongs to the fluoride channel Fluc/FEX (TC 1.A.43) family.

It localises to the cell inner membrane. It catalyses the reaction fluoride(in) = fluoride(out). Its activity is regulated as follows. Na(+) is not transported, but it plays an essential structural role and its presence is essential for fluoride channel function. Its function is as follows. Fluoride-specific ion channel. Important for reducing fluoride concentration in the cell, thus reducing its toxicity. This Shewanella sp. (strain ANA-3) protein is Fluoride-specific ion channel FluC.